The primary structure comprises 526 residues: Peptide chain release factor 3 (526 aa).

The tr-type G domain occupies 9–277 (DKRRTFAIIS…GIVEWAPKPL (269 aa)). Residues 18–25 (SHPDAGKT), 86–90 (DTPGH), and 140–143 (NKLD) each bind GTP.

This sequence belongs to the TRAFAC class translation factor GTPase superfamily. Classic translation factor GTPase family. PrfC subfamily.

Its subcellular location is the cytoplasm. Increases the formation of ribosomal termination complexes and stimulates activities of RF-1 and RF-2. It binds guanine nucleotides and has strong preference for UGA stop codons. It may interact directly with the ribosome. The stimulation of RF-1 and RF-2 is significantly reduced by GTP and GDP, but not by GMP. The sequence is that of Peptide chain release factor 3 from Shewanella sp. (strain ANA-3).